Here is a 183-residue protein sequence, read N- to C-terminus: Putative NAD(P)H nitroreductase YdjA (183 aa).

FMN contacts are provided by residues 10-12 (RRS), R35, and H39. Position 121 to 126 (121 to 126 (AAVAQG)) interacts with NAD(+). Residue 131–133 (WRS) participates in FMN binding.

Belongs to the nitroreductase family. In terms of assembly, homodimer. It depends on FMN as a cofactor.

In Escherichia coli O157:H7, this protein is Putative NAD(P)H nitroreductase YdjA (ydjA).